Here is an 83-residue protein sequence, read N- to C-terminus: UPF0297 protein LCK_00468 (83 aa).

It belongs to the UPF0297 family.

The chain is UPF0297 protein LCK_00468 from Leuconostoc citreum (strain KM20).